The primary structure comprises 362 residues: Peptide chain release factor 1 (362 aa).

An N5-methylglutamine modification is found at Gln-240.

It belongs to the prokaryotic/mitochondrial release factor family. Methylated by PrmC. Methylation increases the termination efficiency of RF1.

The protein localises to the cytoplasm. Peptide chain release factor 1 directs the termination of translation in response to the peptide chain termination codons UAG and UAA. The polypeptide is Peptide chain release factor 1 (Bifidobacterium adolescentis (strain ATCC 15703 / DSM 20083 / NCTC 11814 / E194a)).